The following is a 705-amino-acid chain: DNA ligase (705 aa).

NAD(+) is bound by residues 42–46 (DADFD), 91–92 (SL), and Glu-125. The active-site N6-AMP-lysine intermediate is Lys-127. Residues Arg-148, Glu-183, Lys-299, and Lys-323 each contribute to the NAD(+) site. Zn(2+) contacts are provided by Cys-428, Cys-431, Cys-446, and Cys-452. Residues 626-705 (TDGSPVAGKT…DGWLALIEGL (80 aa)) enclose the BRCT domain.

It belongs to the NAD-dependent DNA ligase family. LigA subfamily. Mg(2+) serves as cofactor. Mn(2+) is required as a cofactor.

It carries out the reaction NAD(+) + (deoxyribonucleotide)n-3'-hydroxyl + 5'-phospho-(deoxyribonucleotide)m = (deoxyribonucleotide)n+m + AMP + beta-nicotinamide D-nucleotide.. Its function is as follows. DNA ligase that catalyzes the formation of phosphodiester linkages between 5'-phosphoryl and 3'-hydroxyl groups in double-stranded DNA using NAD as a coenzyme and as the energy source for the reaction. It is essential for DNA replication and repair of damaged DNA. This is DNA ligase from Roseobacter denitrificans (strain ATCC 33942 / OCh 114) (Erythrobacter sp. (strain OCh 114)).